Reading from the N-terminus, the 435-residue chain is E3 ubiquitin-protein ligase itt1 (435 aa).

The 120-residue stretch at 16-135 folds into the RWD domain; that stretch reads DELIALQSIY…EHVRSIATIA (120 aa). Residues 170 to 420 form a TRIAD supradomain region; it reads RKFQCNVCFD…DPVSSCYGML (251 aa). 18 residues coordinate Zn(2+): C174, C177, C192, H194, C197, C200, C219, C224, C266, C271, C286, C289, C294, C297, H302, C308, C368, and C371. The RING-type 1 zinc-finger motif lies at 174 to 224; the sequence is CNVCFDEFNGTDCFQLTRCGHVSCQSCLRDYYTMCIQEGMFSQIKCIDLDC. The segment at 245–308 adopts an IBR-type zinc-finger fold; sequence TNRYKELEEK…ATWHGDLSPC (64 aa). Residues 368 to 396 form an RING-type 2; atypical zinc finger; sequence CPTCDRVVERIDGCCHMNCLCGTHFCFLC. Residue C381 is part of the active site. Zn(2+)-binding residues include C386, C388, C393, C396, H408, and C416.

Belongs to the RBR family. RNF14 subfamily.

It is found in the cytoplasm. The protein localises to the nucleus. It carries out the reaction [E2 ubiquitin-conjugating enzyme]-S-ubiquitinyl-L-cysteine + [acceptor protein]-L-lysine = [E2 ubiquitin-conjugating enzyme]-L-cysteine + [acceptor protein]-N(6)-ubiquitinyl-L-lysine.. The protein operates within protein modification; protein ubiquitination. In terms of biological role, E3 ubiquitin-protein ligase involved in the rescue of stalled ribosomes by promoting ubiquitination and degradation of proteins on stalled ribosomes. Specifically required to resolve RNA-protein cross-links caused by reactive aldehydes, which trigger translation stress by stalling ribosomes: acts by catalying 'Lys-6'-linked ubiquitination of RNA-protein cross-links, leading to their degradation. In Schizosaccharomyces pombe (strain 972 / ATCC 24843) (Fission yeast), this protein is E3 ubiquitin-protein ligase itt1 (itt1).